Consider the following 119-residue polypeptide: Integration host factor subunit beta (119 aa).

The interval 91-119 is disordered; it reads DLVGNDQGDDSSNGSSDPLQSVMDMHAMH. Residues 94 to 107 show a composition bias toward low complexity; the sequence is GNDQGDDSSNGSSD.

It belongs to the bacterial histone-like protein family. Heterodimer of an alpha and a beta chain.

In terms of biological role, this protein is one of the two subunits of integration host factor, a specific DNA-binding protein that functions in genetic recombination as well as in transcriptional and translational control. The sequence is that of Integration host factor subunit beta from Bordetella parapertussis (strain 12822 / ATCC BAA-587 / NCTC 13253).